A 286-amino-acid polypeptide reads, in one-letter code: Prepilin leader peptidase/N-methyltransferase (286 aa).

A helical membrane pass occupies residues 10–30; sequence FAVPLAAVLGLLVGSFLNVVI. Zn(2+) contacts are provided by cysteine 70, cysteine 73, cysteine 95, and cysteine 98. A run of 6 helical transmembrane segments spans residues 102–122, 126–146, 157–177, 181–201, 224–244, and 250–270; these read ISIRYPLIELLTGVLFGLVAW, WSWITLGGLILTAFLISLTFI, MTLPLIWLGLIFNLDGGFVPL, VLGAVAGYSSLWLLCAVYKLL, ISALPVLIFVSSLIGLVAAIV, and GRHFAFGPALTVSGWIIFTAN.

This sequence belongs to the peptidase A24 family. Zn(2+) is required as a cofactor.

Its subcellular location is the cell inner membrane. The catalysed reaction is Typically cleaves a -Gly-|-Phe- bond to release an N-terminal, basic peptide of 5-8 residues from type IV prepilin, and then N-methylates the new N-terminal amino group, the methyl donor being S-adenosyl-L-methionine.. Functionally, plays an essential role in type IV pili and type II pseudopili formation by proteolytically removing the leader sequence from substrate proteins and subsequently monomethylating the alpha-amino group of the newly exposed N-terminal phenylalanine. In Neisseria gonorrhoeae, this protein is Prepilin leader peptidase/N-methyltransferase (pilD).